Consider the following 1331-residue polypeptide: Receptor-type adenylate cyclase B (1331 aa).

Residues Met1 to Arg33 are Cytoplasmic-facing. A helical membrane pass occupies residues Leu34 to Val54. The Extracellular portion of the chain corresponds to Pro55–Gly898. N-linked (GlcNAc...) asparagine glycans are attached at residues Asn255, Asn429, Asn558, Asn574, and Asn657. A helical transmembrane segment spans residues Gly899 to Leu919. The Cytoplasmic segment spans residues Tyr920–His1331. Residues Thr940–Glu1094 form the Guanylate cyclase domain. 2 residues coordinate Mg(2+): Asp945 and Asp988.

This sequence belongs to the adenylyl cyclase class-3 family. The cofactor is Mg(2+).

The protein localises to the membrane. It carries out the reaction ATP = 3',5'-cyclic AMP + diphosphate. Its function is as follows. Could act as a receptor for an unknown ligand. The chain is Receptor-type adenylate cyclase B (RAC-B) from Leishmania donovani.